Here is a 466-residue protein sequence, read N- to C-terminus: Vimentin (466 aa).

The span at 1–13 shows a compositional bias: low complexity; that stretch reads MSTRSVSSSSYRR. The tract at residues 1-31 is disordered; sequence MSTRSVSSSSYRRMFGGPGTASRPSSTRSYV. Serine 2 is modified (N-acetylserine). The interval 2-95 is head; that stretch reads STRSVSSSSY…FSLADAINTE (94 aa). A Phosphoserine modification is found at serine 5. At serine 7 the chain carries Phosphoserine; by PKA and PKC; alternate. Serine 7 carries an O-linked (GlcNAc) serine; alternate glycan. Serine 8 bears the Phosphoserine mark. Phosphoserine; by PKC is present on residues serine 9 and serine 10. Phosphothreonine is present on threonine 20. Residue serine 25 is modified to Phosphoserine; by PKA and PKC. Position 26 is a phosphoserine; by PKC (serine 26). Threonine 33 carries O-linked (GlcNAc) threonine glycosylation. The O-linked (GlcNAc) serine; alternate glycan is linked to serine 34. The residue at position 34 (serine 34) is a Phosphoserine; by PKC; alternate. Phosphoserine; by CaMK2, PKA, PKC and ROCK2 is present on serine 39. At serine 42 the chain carries Phosphoserine; by PKC. The residue at position 49 (serine 49) is a Phosphoserine. Tyrosine 53 is modified (phosphotyrosine). Phosphoserine is present on serine 55. Serine 56 carries the post-translational modification Phosphoserine; by CDK5 and CDK1. Tyrosine 61 carries the post-translational modification Phosphotyrosine. Serine 66 bears the Phosphoserine; by PKA and PKC mark. Serine 72 is subject to Phosphoserine; by AURKB and ROCK2. Serine 83 bears the Phosphoserine; by CaMK2 mark. Position 87 is a phosphoserine (serine 87). The coil 1A stretch occupies residues 96–131; it reads FKNTRTNEKVELQELNDRFANYIDKVRFLEQQNKIL. Positions 96-131 form a coiled coil; that stretch reads FKNTRTNEKVELQELNDRFANYIDKVRFLEQQNKIL. Positions 103–411 constitute an IF rod domain; that stretch reads EKVELQELND…KLLEGEESRI (309 aa). A Glycyl lysine isopeptide (Lys-Gly) (interchain with G-Cter in SUMO2) cross-link involves residue lysine 104. The residue at position 117 (tyrosine 117) is a Phosphotyrosine. 3 positions are modified to N6-acetyllysine; alternate: lysine 120, lysine 129, and lysine 139. 2 positions are modified to N6-succinyllysine; alternate: lysine 120 and lysine 129. Residues lysine 120, lysine 129, and lysine 139 each participate in a glycyl lysine isopeptide (Lys-Gly) (interchain with G-Cter in SUMO2); alternate cross-link. Residues 132 to 153 form a linker 1 region; sequence LAELEQLKGQGKSRLGDLYEEE. The residue at position 144 (serine 144) is a Phosphoserine. The stretch at 154-245 forms a coiled coil; that stretch reads MRELRRQVDQ…KLHDEEIQEL (92 aa). The interval 154–245 is coil 1B; that stretch reads MRELRRQVDQ…KLHDEEIQEL (92 aa). Position 168 is an N6-acetyllysine (lysine 168). Lysine 188 is subject to N6-acetyllysine; alternate. Lysine 188 bears the N6-succinyllysine; alternate mark. Serine 214 carries the post-translational modification Phosphoserine. The residue at position 223 (lysine 223) is an N6-acetyllysine; alternate. A Glycyl lysine isopeptide (Lys-Gly) (interchain with G-Cter in SUMO2); alternate cross-link involves residue lysine 223. Serine 226 is modified (phosphoserine). The residue at position 235 (lysine 235) is an N6-acetyllysine. The segment at 246-268 is linker 12; it reads QAQIQEQHVQIDMDVSKPDLTAA. Lysine 262 is covalently cross-linked (Glycyl lysine isopeptide (Lys-Gly) (interchain with G-Cter in SUMO2)). The segment at 269-407 is coil 2; the sequence is LRDVRQQYES…ATYRKLLEGE (139 aa). Lysine 294 is modified (N6-acetyllysine; alternate). Lysine 294 bears the N6-succinyllysine; alternate mark. A Glycyl lysine isopeptide (Lys-Gly) (interchain with G-Cter in SUMO2); alternate cross-link involves residue lysine 294. The residue at position 299 (serine 299) is a Phosphoserine. The stretch at 303–407 forms a coiled coil; the sequence is NRNNDALRQA…ATYRKLLEGE (105 aa). A Glycyl lysine isopeptide (Lys-Gly) (interchain with G-Cter in SUMO2) cross-link involves residue lysine 313. Positions 326–329 match the [IL]-x-C-x-x-[DE] motif motif; it reads LTCE. Lysine 373 carries the N6-acetyllysine; alternate modification. Lysine 373 is covalently cross-linked (Glycyl lysine isopeptide (Lys-Gly) (interchain with G-Cter in SUMO2); alternate). Residues 408–466 form a tail region; the sequence is ESRISLPLPNFSSLNLRETNLDSLPLVDTHSKRTLLIKTVETRDGQVINETSQHHDDLE. Residues serine 409, serine 412, serine 419, and serine 420 each carry the phosphoserine modification. Threonine 426 is modified (phosphothreonine). Position 430 is a phosphoserine (serine 430). The residue at position 436 (threonine 436) is a Phosphothreonine. The residue at position 438 (serine 438) is a Phosphoserine. Lysine 439 participates in a covalent cross-link: Glycyl lysine isopeptide (Lys-Gly) (interchain with G-Cter in SUMO2). Lysine 445 carries the N6-acetyllysine; alternate modification. Lysine 445 is modified (N6-succinyllysine; alternate). Lysine 445 participates in a covalent cross-link: Glycyl lysine isopeptide (Lys-Gly) (interchain with G-Cter in SUMO2); alternate. Lysine 445 is covalently cross-linked (Glycyl lysine isopeptide (Lys-Gly) (interchain with G-Cter in SUMO1); alternate). Threonine 446 and threonine 458 each carry phosphothreonine. A Phosphoserine modification is found at serine 459.

This sequence belongs to the intermediate filament family. In terms of assembly, homomer assembled from elementary dimers. Identified in complexes that contain VIM, EZR, AHNAK, BFSP1, BFSP2, ANK2, PLEC, PRX and spectrin. Interacts with BCAS3. Interacts with LGSN. Interacts with SYNM. Interacts (via rod region) with PLEC (via CH 1 domain). Interacts with STK33. Interacts with LARP6. Interacts with RAB8B. Interacts with TOR1A; the interaction associates TOR1A with the cytoskeleton. Interacts with TOR1AIP1. Interacts with TOR1AIP1. Interacts with DIAPH1. Interacts with EPPK1; interaction is dependent of higher-order structure of intermediate filament. Interacts with the non-receptor tyrosine kinase SRMS; the interaction leads to phosphorylation of VIM. Interacts with NOD2. Interacts (via head region) with CORO1C. Interacts with HDGF. Interacts with PRKCE (via phorbol-ester/DAG-type 2 domain). Interacts with BFSP2. Interacts with PPL. Interacts with PKP1 and PKP2. Interacts with SCRIB (via PDZ domains); the interaction protects SCRIB from proteasomal degradation and facilitates SCRIB localization to intermediate filaments, the interaction is reduced by cell contact inhibition. One of the most prominent phosphoproteins in various cells of mesenchymal origin. Phosphorylation is enhanced during cell division, at which time vimentin filaments are significantly reorganized. Phosphorylation by PKN1 inhibits the formation of filaments. Filament disassembly during mitosis is promoted by phosphorylation at Ser-55 as well as by nestin. Phosphorylated at Ser-56 by CDK5 during neutrophil secretion in the cytoplasm. Phosphorylated by STK33. Phosphorylated on tyrosine residues by SRMS. Post-translationally, S-nitrosylation is induced by interferon-gamma and oxidatively-modified low-densitity lipoprotein (LDL(ox)) possibly implicating the iNOS-S100A8/9 transnitrosylase complex.

It is found in the cytoplasm. It localises to the cytoskeleton. The protein localises to the nucleus matrix. The protein resides in the cell membrane. Its function is as follows. Vimentins are class-III intermediate filaments found in various non-epithelial cells, especially mesenchymal cells. Vimentin is attached to the nucleus, endoplasmic reticulum, and mitochondria, either laterally or terminally. Plays a role in cell directional movement, orientation, cell sheet organization and Golgi complex polarization at the cell migration front. Protects SCRIB from proteasomal degradation and facilitates its localization to intermediate filaments in a cell contact-mediated manner. In terms of biological role, involved with LARP6 in the stabilization of type I collagen mRNAs for CO1A1 and CO1A2. The chain is Vimentin (VIM) from Bos taurus (Bovine).